Here is a 501-residue protein sequence, read N- to C-terminus: ATP synthase subunit alpha (501 aa).

Residue 169 to 176 (GDRQTGKT) coordinates ATP.

This sequence belongs to the ATPase alpha/beta chains family. In terms of assembly, F-type ATPases have 2 components, CF(1) - the catalytic core - and CF(0) - the membrane proton channel. CF(1) has five subunits: alpha(3), beta(3), gamma(1), delta(1), epsilon(1). CF(0) has three main subunits: a(1), b(2) and c(9-12). The alpha and beta chains form an alternating ring which encloses part of the gamma chain. CF(1) is attached to CF(0) by a central stalk formed by the gamma and epsilon chains, while a peripheral stalk is formed by the delta and b chains.

It is found in the cell membrane. The enzyme catalyses ATP + H2O + 4 H(+)(in) = ADP + phosphate + 5 H(+)(out). In terms of biological role, produces ATP from ADP in the presence of a proton gradient across the membrane. The alpha chain is a regulatory subunit. This is ATP synthase subunit alpha from Streptococcus uberis (strain ATCC BAA-854 / 0140J).